The primary structure comprises 324 residues: Probable uridine nucleosidase 1 (324 aa).

H248 is an active-site residue.

Belongs to the IUNH family.

It is found in the cytoplasm. The catalysed reaction is uridine + H2O = D-ribose + uracil. Its function is as follows. Involved in pyrimidine breakdown. The polypeptide is Probable uridine nucleosidase 1 (URH1) (Oryza sativa subsp. japonica (Rice)).